The sequence spans 396 residues: Elongation factor Tu (396 aa).

Positions 10–206 (KLHVNVGTIG…ALDTHIPNPE (197 aa)) constitute a tr-type G domain. A G1 region spans residues 19–26 (GHVDHGKT). 19–26 (GHVDHGKT) provides a ligand contact to GTP. Position 26 (Thr-26) interacts with Mg(2+). The interval 60 to 64 (GITIS) is G2. Positions 81-84 (DCPG) are G3. Residues 81–85 (DCPGH) and 136–139 (NKAD) contribute to the GTP site. The interval 136–139 (NKAD) is G4. Residues 174-176 (SAL) form a G5 region.

The protein belongs to the TRAFAC class translation factor GTPase superfamily. Classic translation factor GTPase family. EF-Tu/EF-1A subfamily. In terms of assembly, monomer.

The protein resides in the cytoplasm. The enzyme catalyses GTP + H2O = GDP + phosphate + H(+). Functionally, GTP hydrolase that promotes the GTP-dependent binding of aminoacyl-tRNA to the A-site of ribosomes during protein biosynthesis. In Xylella fastidiosa (strain Temecula1 / ATCC 700964), this protein is Elongation factor Tu.